Reading from the N-terminus, the 274-residue chain is Large ribosomal subunit protein uL2cz/uL2cy (274 aa).

Disordered regions lie at residues Met-1–Val-22 and Asn-224–Lys-274.

This sequence belongs to the universal ribosomal protein uL2 family. Part of the 50S ribosomal subunit.

The protein resides in the plastid. It localises to the chloroplast. The sequence is that of Large ribosomal subunit protein uL2cz/uL2cy (rpl2-A) from Helianthus annuus (Common sunflower).